Reading from the N-terminus, the 198-residue chain is Recombination protein RecR (198 aa).

The segment at 57–72 (CSVCGHITENDPCYIC) adopts a C4-type zinc-finger fold. The Toprim domain occupies 80–175 (SVICVVEDDK…KVTRLAQGLS (96 aa)).

Belongs to the RecR family.

May play a role in DNA repair. It seems to be involved in an RecBC-independent recombinational process of DNA repair. It may act with RecF and RecO. The chain is Recombination protein RecR from Staphylococcus aureus (strain MRSA252).